We begin with the raw amino-acid sequence, 491 residues long: Argininosuccinate lyase (491 aa).

The protein belongs to the lyase 1 family. Argininosuccinate lyase subfamily.

Its subcellular location is the cytoplasm. It carries out the reaction 2-(N(omega)-L-arginino)succinate = fumarate + L-arginine. It functions in the pathway amino-acid biosynthesis; L-arginine biosynthesis; L-arginine from L-ornithine and carbamoyl phosphate: step 3/3. The protein is Argininosuccinate lyase of Methanosarcina acetivorans (strain ATCC 35395 / DSM 2834 / JCM 12185 / C2A).